Here is a 120-residue protein sequence, read N- to C-terminus: uncharacterized protein (120 aa).

This is an uncharacterized protein from Aquifex aeolicus (strain VF5).